The primary structure comprises 370 residues: Phosphate acyltransferase (370 aa).

The protein belongs to the PlsX family. Homodimer. Probably interacts with PlsY.

It is found in the cytoplasm. It carries out the reaction a fatty acyl-[ACP] + phosphate = an acyl phosphate + holo-[ACP]. The protein operates within lipid metabolism; phospholipid metabolism. In terms of biological role, catalyzes the reversible formation of acyl-phosphate (acyl-PO(4)) from acyl-[acyl-carrier-protein] (acyl-ACP). This enzyme utilizes acyl-ACP as fatty acyl donor, but not acyl-CoA. In Polaromonas naphthalenivorans (strain CJ2), this protein is Phosphate acyltransferase.